A 243-amino-acid chain; its full sequence is Probable fructoselysine utilization operon transcriptional repressor (243 aa).

Positions 10–78 constitute an HTH gntR-type domain; the sequence is QLLYATVRQR…QGKGTFVQSQ (69 aa). Residues 38 to 57 constitute a DNA-binding region (H-T-H motif); it reads ENELCTQYNVSRITIRKAIS.

It functions in the pathway carbohydrate metabolism; fructoselysine degradation [regulation]. In terms of biological role, may regulate the transcription of the frlABCDR operon, involved in the utilization of fructoselysine and psicoselysine. This chain is Probable fructoselysine utilization operon transcriptional repressor (frlR), found in Shigella flexneri.